The primary structure comprises 357 residues: F-box only protein 25 (357 aa).

The interaction with beta-actin stretch occupies residues 1 to 83 (MPFLGQDWRS…DTAAHSFYRE (83 aa)). Residues 225 to 273 (LTLSDLPLHMLNNILYRFSDGWDIVTLGQVTPTLYMLSEDRRLWKRLCQ) enclose the F-box domain.

In terms of assembly, part of a SCF (SKP1-cullin-F-box) protein ligase complex consisting of FBXO25, SKP1, CUL1 and RBX1. Interacts directly with SKP1 and CUL1. Interacts (via C-terminus) with beta-actin (via N-terminus). Expressed in all tissues tested, except striated muscle (at protein level). Expressed predominantly in the cerebral cortex, the hippocampus and the Purkinje cell layer of the brain. Intestine and kidney show also significant levels.

It is found in the nucleus. It participates in protein modification; protein ubiquitination. Its function is as follows. Substrate-recognition component of the SCF (SKP1-CUL1-F-box protein)-type E3 ubiquitin ligase complex. May play a role in accumulation of expanded polyglutamine (polyQ) protein huntingtin (HTT). This is F-box only protein 25 (Fbxo25) from Mus musculus (Mouse).